We begin with the raw amino-acid sequence, 79 residues long: DNA-directed RNA polymerase subunit omega (79 aa).

Belongs to the RNA polymerase subunit omega family. As to quaternary structure, the RNAP catalytic core consists of 2 alpha, 1 beta, 1 beta' and 1 omega subunit. When a sigma factor is associated with the core the holoenzyme is formed, which can initiate transcription.

It carries out the reaction RNA(n) + a ribonucleoside 5'-triphosphate = RNA(n+1) + diphosphate. Functionally, promotes RNA polymerase assembly. Latches the N- and C-terminal regions of the beta' subunit thereby facilitating its interaction with the beta and alpha subunits. This Thermotoga petrophila (strain ATCC BAA-488 / DSM 13995 / JCM 10881 / RKU-1) protein is DNA-directed RNA polymerase subunit omega.